The chain runs to 604 residues: Glutamine--fructose-6-phosphate aminotransferase [isomerizing] (604 aa).

Cysteine 2 (nucleophile; for GATase activity) is an active-site residue. Residues 2 to 219 (CGIMGAVSER…EGDSACVTTQ (218 aa)) enclose the Glutamine amidotransferase type-2 domain. SIS domains follow at residues 279 to 427 (LRAS…DNRA) and 454 to 594 (LASL…VDQP). Lysine 599 acts as the For Fru-6P isomerization activity in catalysis.

Homodimer.

Its subcellular location is the cytoplasm. It carries out the reaction D-fructose 6-phosphate + L-glutamine = D-glucosamine 6-phosphate + L-glutamate. Its function is as follows. Catalyzes the first step in hexosamine metabolism, converting fructose-6P into glucosamine-6P using glutamine as a nitrogen source. The chain is Glutamine--fructose-6-phosphate aminotransferase [isomerizing] from Legionella pneumophila subsp. pneumophila (strain Philadelphia 1 / ATCC 33152 / DSM 7513).